The primary structure comprises 96 residues: Integration host factor subunit alpha (96 aa).

Belongs to the bacterial histone-like protein family. In terms of assembly, heterodimer of an alpha and a beta chain.

In terms of biological role, this protein is one of the two subunits of integration host factor, a specific DNA-binding protein that functions in genetic recombination as well as in transcriptional and translational control. The sequence is that of Integration host factor subunit alpha from Haemophilus influenzae (strain 86-028NP).